The primary structure comprises 164 residues: Small ribosomal subunit protein uS5 (164 aa).

One can recognise an S5 DRBM domain in the interval 10–73 (LEERVVAINR…EAAKKNLIEV (64 aa)).

It belongs to the universal ribosomal protein uS5 family. In terms of assembly, part of the 30S ribosomal subunit. Contacts proteins S4 and S8.

Its function is as follows. With S4 and S12 plays an important role in translational accuracy. Functionally, located at the back of the 30S subunit body where it stabilizes the conformation of the head with respect to the body. The polypeptide is Small ribosomal subunit protein uS5 (Streptococcus thermophilus (strain CNRZ 1066)).